The primary structure comprises 386 residues: Patatin-04/09 (386 aa).

A signal peptide spans 1–23 (MATTKSFLILFFMILATTSSTCA). In terms of domain architecture, PNPLA spans 32 to 229 (LSIDGGGIKG…TVGDPALLSL (198 aa)). The GXGXXG motif lies at 36-41 (GGGIKG). A GXSXG motif is present at residues 75-79 (GTSTG). Serine 77 (nucleophile) is an active-site residue. N-linked (GlcNAc...) asparagine glycosylation occurs at asparagine 115. Aspartate 215 serves as the catalytic Proton acceptor. Residues 215-217 (DGG) carry the DGA/G motif. Positions 321 to 384 (ENALNGTTTE…DRKKLRANKA (64 aa)) form a coiled coil. The N-linked (GlcNAc...) asparagine glycan is linked to asparagine 325.

This sequence belongs to the patatin family. As to expression, tuber.

The protein localises to the vacuole. Probable lipolytic acyl hydrolase (LAH), an activity which is thought to be involved in the response of tubers to pathogens. This is Patatin-04/09 from Solanum tuberosum (Potato).